The chain runs to 228 residues: L-ribulose-5-phosphate 4-epimerase UlaF (228 aa).

Residues 26–27 (GN), 43–44 (SG), and 72–73 (SS) each bind substrate. Residues Asp74, His93, and His95 each coordinate Zn(2+). The active-site Proton donor/acceptor is the Asp118. A Zn(2+)-binding site is contributed by His167. Tyr225 (proton donor/acceptor) is an active-site residue.

It belongs to the aldolase class II family. AraD/FucA subfamily. Requires Zn(2+) as cofactor.

It carries out the reaction L-ribulose 5-phosphate = D-xylulose 5-phosphate. It participates in cofactor degradation; L-ascorbate degradation; D-xylulose 5-phosphate from L-ascorbate: step 4/4. Functionally, catalyzes the isomerization of L-ribulose 5-phosphate to D-xylulose 5-phosphate. Is involved in the anaerobic L-ascorbate utilization. The polypeptide is L-ribulose-5-phosphate 4-epimerase UlaF (Escherichia coli (strain 55989 / EAEC)).